The following is a 344-amino-acid chain: Dihydroorotase (344 aa).

The Zn(2+) site is built by histidine 13 and histidine 15. Substrate is bound by residues 15 to 17 and asparagine 41; that span reads HLR. Zn(2+) contacts are provided by lysine 98, histidine 135, and histidine 173. Lysine 98 is modified (N6-carboxylysine). A substrate-binding site is contributed by histidine 135. Residue leucine 218 coordinates substrate. Aspartate 247 is a Zn(2+) binding site. Residue aspartate 247 is part of the active site. Histidine 251 and alanine 263 together coordinate substrate.

It belongs to the metallo-dependent hydrolases superfamily. DHOase family. Class II DHOase subfamily. Homodimer. Zn(2+) is required as a cofactor.

The catalysed reaction is (S)-dihydroorotate + H2O = N-carbamoyl-L-aspartate + H(+). It participates in pyrimidine metabolism; UMP biosynthesis via de novo pathway; (S)-dihydroorotate from bicarbonate: step 3/3. In terms of biological role, catalyzes the reversible cyclization of carbamoyl aspartate to dihydroorotate. In Neisseria meningitidis serogroup C (strain 053442), this protein is Dihydroorotase.